Reading from the N-terminus, the 1285-residue chain is Peroxisomal ATPase PEX1 (1285 aa).

Residues 344–353 (QQGKTKQSVM) show a composition bias toward polar residues. The interval 344–373 (QQGKTKQSVMSPEKEKHPLESPNHKQIGSD) is disordered. Position 354 is a phosphoserine (Ser-354). A compositionally biased stretch (basic and acidic residues) spans 355–373 (PEKEKHPLESPNHKQIGSD). Residues 601 to 608 (GGKGSGKS) and 883 to 890 (GPPGTGKT) each bind ATP. Residues 1142–1161 (NGTSSDLSSQCPSAPSSVTQ) are compositionally biased toward polar residues. The interval 1142–1162 (NGTSSDLSSQCPSAPSSVTQD) is disordered. 3 positions are modified to phosphoserine: Ser-1183, Ser-1211, and Ser-1213. Residues 1262–1285 (FQNPKKRKNPSGTVFRPGQKVTLA) are disordered.

It belongs to the AAA ATPase family. Homooligomer; homooligomerizes in the cytosol, interaction with PEX6 promotes dissociation of the homooligomer. Interacts with PEX6; forming the PEX1-PEX6 AAA ATPase complex, which is composed of a heterohexamer formed by a trimer of PEX1-PEX6 dimers. Interacts indirectly with PEX26, via its interaction with PEX6.

It is found in the cytoplasm. The protein resides in the cytosol. It localises to the peroxisome membrane. It catalyses the reaction ATP + H2O = ADP + phosphate + H(+). Component of the PEX1-PEX6 AAA ATPase complex, a protein dislocase complex that mediates the ATP-dependent extraction of the PEX5 receptor from peroxisomal membranes, an essential step for PEX5 recycling. Specifically recognizes PEX5 monoubiquitinated at 'Cys-11', and pulls it out of the peroxisome lumen through the PEX2-PEX10-PEX12 retrotranslocation channel. Extraction by the PEX1-PEX6 AAA ATPase complex is accompanied by unfolding of the TPR repeats and release of bound cargo from PEX5. This is Peroxisomal ATPase PEX1 from Cricetulus griseus (Chinese hamster).